Consider the following 128-residue polypeptide: LIM domain-containing protein 2 (128 aa).

Methionine 1 carries the post-translational modification N-acetylmethionine. The segment at 1 to 25 (MFQAAGAAQATPSHEAKGSSGSSTV) is disordered. Positions 39–99 (ETCAACQKTV…RPHFQQLFKS (61 aa)) constitute an LIM zinc-binding domain. 8 residues coordinate Zn(2+): cysteine 41, cysteine 44, histidine 62, cysteine 65, cysteine 68, cysteine 71, cysteine 89, and histidine 92.

In terms of assembly, interacts with ILK.

The protein localises to the cytoplasm. It is found in the nucleus. Acts as an activator of the protein-kinase ILK, thereby regulating cell motility. The chain is LIM domain-containing protein 2 from Mus musculus (Mouse).